We begin with the raw amino-acid sequence, 410 residues long: Cysteine desulfurase IscS (410 aa).

Pyridoxal 5'-phosphate contacts are provided by residues 80–81 (AT), Asn-160, Gln-188, and 208–210 (SGH). Lys-211 bears the N6-(pyridoxal phosphate)lysine mark. Thr-248 is a pyridoxal 5'-phosphate binding site. Residue Cys-334 is the Cysteine persulfide intermediate of the active site. Residue Cys-334 coordinates [2Fe-2S] cluster.

The protein belongs to the class-V pyridoxal-phosphate-dependent aminotransferase family. NifS/IscS subfamily. In terms of assembly, homodimer. Forms a heterotetramer with IscU, interacts with other sulfur acceptors. The cofactor is pyridoxal 5'-phosphate.

It localises to the cytoplasm. The catalysed reaction is (sulfur carrier)-H + L-cysteine = (sulfur carrier)-SH + L-alanine. It functions in the pathway cofactor biosynthesis; iron-sulfur cluster biosynthesis. In terms of biological role, master enzyme that delivers sulfur to a number of partners involved in Fe-S cluster assembly, tRNA modification or cofactor biosynthesis. Catalyzes the removal of elemental sulfur atoms from cysteine to produce alanine. Functions as a sulfur delivery protein for Fe-S cluster synthesis onto IscU, an Fe-S scaffold assembly protein, as well as other S acceptor proteins. This chain is Cysteine desulfurase IscS, found in Rickettsia conorii (strain ATCC VR-613 / Malish 7).